The primary structure comprises 188 residues: dCTP deaminase (188 aa).

DCTP is bound by residues 111–116 (KSTYAR), 135–137 (TLE), glutamine 156, tyrosine 170, and glutamine 180. Residue glutamate 137 is the Proton donor/acceptor of the active site.

This sequence belongs to the dCTP deaminase family. As to quaternary structure, homotrimer.

It carries out the reaction dCTP + H2O + H(+) = dUTP + NH4(+). Its pathway is pyrimidine metabolism; dUMP biosynthesis; dUMP from dCTP (dUTP route): step 1/2. Catalyzes the deamination of dCTP to dUTP. The polypeptide is dCTP deaminase (Cupriavidus pinatubonensis (strain JMP 134 / LMG 1197) (Cupriavidus necator (strain JMP 134))).